The chain runs to 519 residues: Fatty acid--[acyl-carrier-protein] ligase ScoC (519 aa).

A Mg(2+)-binding site is contributed by threonine 167. ATP contacts are provided by isoleucine 216 and threonine 312. A Mg(2+)-binding site is contributed by glutamate 313. ATP contacts are provided by aspartate 394 and lysine 411.

This sequence belongs to the ATP-dependent AMP-binding enzyme family. The cofactor is Mg(2+).

The catalysed reaction is a medium-chain fatty acid + holo-[ACP] + ATP = a medium-chain fatty acyl-[ACP] + AMP + diphosphate. It carries out the reaction a medium-chain fatty acid + ATP + H(+) = a medium-chain fatty acyl-AMP + diphosphate. The enzyme catalyses a medium-chain fatty acyl-AMP + holo-[ACP] = a medium-chain fatty acyl-[ACP] + AMP + H(+). It catalyses the reaction octanoate + holo-[ACP] + ATP = octanoyl-[ACP] + AMP + diphosphate. The catalysed reaction is octanoate + ATP + H(+) = octanoyl-AMP + diphosphate. It carries out the reaction octanoyl-AMP + holo-[ACP] = octanoyl-[ACP] + AMP + H(+). The enzyme catalyses a (2E)-enoyl fatty acid + holo-[ACP] + ATP = a (2E)-enoyl-[ACP] + AMP + diphosphate. It catalyses the reaction a (2E)-enoyl fatty acid + ATP + H(+) = a (2E)-2-fatty-enoyl-AMP + diphosphate. The catalysed reaction is a (2E)-2-fatty-enoyl-AMP + holo-[ACP] = a (2E)-enoyl-[ACP] + AMP + H(+). It carries out the reaction (2E)-2-butenoate + holo-[ACP] + ATP = (2E)-butenoyl-[ACP] + AMP + diphosphate. The enzyme catalyses (2E)-2-butenoate + ATP + H(+) = (2E)-but-2-enoyl-AMP + diphosphate. It catalyses the reaction (2E)-but-2-enoyl-AMP + holo-[ACP] = (2E)-butenoyl-[ACP] + AMP + H(+). The catalysed reaction is a (3R)-3-isocyanyl-fatty acid + holo-[ACP] + ATP = a (3R)-3-isocyanyl-fatty acyl-[ACP] + AMP + diphosphate. It carries out the reaction a (3R)-3-isocyanyl-fatty acid + ATP + H(+) = a (3R)-3-isocyanyl-fatty acyl-AMP + diphosphate. The enzyme catalyses a (3R)-3-isocyanyl-fatty acyl-AMP + holo-[ACP] = a (3R)-3-isocyanyl-fatty acyl-[ACP] + AMP + H(+). It catalyses the reaction (3R)-3-isocyanylbutanoate + holo-[ACP] + ATP = (3R)-3-isocyanylbutanoyl-[ACP] + AMP + diphosphate. The catalysed reaction is (3R)-3-isocyanylbutanoate + ATP + H(+) = (3R)-3-isocyanylbutanoyl-AMP + diphosphate. It carries out the reaction (3R)-3-isocyanylbutanoyl-AMP + holo-[ACP] = (3R)-3-isocyanylbutanoyl-[ACP] + AMP + H(+). Functionally, acyl:acyl-carrier protein ligase involved in the biosynthesis of a unique class of isonitrile lipopeptides (INLPs). Shows a strong preference for fatty acids with a short/medium-chain length (C4-C8) in vitro, and accepts alpha,beta-unsaturated fatty acids such as crotonate, which seems to be a physiological substrate. Acts twice during the INLP pathway, catalyzing the activation of crotonate ((2E)-2-butenoate) as well as (3R)-3-isocyanylbutanoate as acyl-adenylates (acyl-AMP), and then the acyl transfer to the dedicated acyl-carrier protein ScoB. The chain is Fatty acid--[acyl-carrier-protein] ligase ScoC from Streptomyces coeruleorubidus.